The sequence spans 448 residues: uncharacterized protein (448 aa).

A compositionally biased stretch (basic and acidic residues) spans 187-198 (SKGDRGDADDRG). Disordered regions lie at residues 187 to 221 (SKGD…LPTR), 243 to 270 (LQVP…GATM), and 291 to 361 (LSGL…LPNG). The span at 243–261 (LQVPGGTSAAIPSASSTPS) shows a compositional bias: low complexity. Over residues 307-334 (FDERGQEVRDPADYEHSNEPDERRADDR) the composition is skewed to basic and acidic residues.

It to M.tuberculosis Rv0025 and Rv0739.

This is an uncharacterized protein from Mycobacterium tuberculosis (strain ATCC 25618 / H37Rv).